We begin with the raw amino-acid sequence, 246 residues long: Hydroxyacylglutathione hydrolase (246 aa).

Histidine 58, histidine 60, aspartate 62, histidine 63, histidine 117, aspartate 137, and histidine 175 together coordinate Zn(2+).

It belongs to the metallo-beta-lactamase superfamily. Glyoxalase II family. Monomer. The cofactor is Zn(2+).

It carries out the reaction an S-(2-hydroxyacyl)glutathione + H2O = a 2-hydroxy carboxylate + glutathione + H(+). Its pathway is secondary metabolite metabolism; methylglyoxal degradation; (R)-lactate from methylglyoxal: step 2/2. In terms of biological role, thiolesterase that catalyzes the hydrolysis of S-D-lactoyl-glutathione to form glutathione and D-lactic acid. The protein is Hydroxyacylglutathione hydrolase of Prochlorococcus marinus (strain MIT 9312).